We begin with the raw amino-acid sequence, 114 residues long: Putative ANKRD40 C-terminal-like protein (114 aa).

This is Putative ANKRD40 C-terminal-like protein from Homo sapiens (Human).